We begin with the raw amino-acid sequence, 106 residues long: Small ribosomal subunit protein bS16 (106 aa).

The protein belongs to the bacterial ribosomal protein bS16 family.

The protein is Small ribosomal subunit protein bS16 of Wolbachia sp. subsp. Brugia malayi (strain TRS).